The following is a 784-amino-acid chain: MNKKSLPLMALRDMVLFPGVIAPIFVGRKKSLQALSRTTISEENNTKYILVTLQKKFDQENPSKHELYNTAILAKIIQIVKLPNNTAKILIEAVARVKLSDIKDEESFEANYEIIPDEEILDMHNMRSLVDNAVQLFNKYAMNDKKVNTEIIETINKEISNKTNFINIINILASHLITSLETKQQLLEETSPVKRITTVITTLTSNIVNSETEHALQQRVRKQIEKTQRDYYLHEQMKAIQKELDEDKSELADIEKKIKSLKLSKEAKEKAESEFKKLRAMNQMSAESGVTRNYLETLLSLPWGKYDNSKIDINQAEKILNRDHFGLEKVKERIIEYLAVLQRSNKIRGPILCLIGPPGVGKTSLVKSIAEGMGRKYAKFSLGGVRDEAEIRGHRKTYLGSMPGKILGQLKKVKTSNPVMLLDEIDKMSSDFRGDPASALLEVLDPEQNSHFVDHYLEVEYDLSNVVFIATANSHDLPRALSDRMEKIYISGYVEEEKLQIAKNYLVPKQFKVHKIKKDEITISEDAILDLIRYYTKESGVRALEREICALTRKALKQILADNTVKNISIDSNNLEEFLGAKKYNFGLVEKEDQIGSTTGLAYTEVGGELLTIEALAFSGKGEIKTTGKLGDVMKESAMAAYSCFRSRAPNFGLKYDNYKDFDIHIHVPAGAIPKDGPSAGCALFTTIVSLMTKIPVHRTVAMTGEITLRGNVLPIGGLKEKLLAASRGGIKTVLIPEENVKDLKDIPPNIKENLEIISVSNIDQVLKHALVEMPINKGLSYDL.

The Lon N-terminal domain occupies 6 to 207 (LPLMALRDMV…TVITTLTSNI (202 aa)). Position 356–363 (356–363 (GPPGVGKT)) interacts with ATP. The region spanning 592-773 (EDQIGSTTGL…DQVLKHALVE (182 aa)) is the Lon proteolytic domain. Residues Ser-679 and Lys-722 contribute to the active site.

It belongs to the peptidase S16 family. As to quaternary structure, homohexamer. Organized in a ring with a central cavity.

It localises to the cytoplasm. It carries out the reaction Hydrolysis of proteins in presence of ATP.. Functionally, ATP-dependent serine protease that mediates the selective degradation of mutant and abnormal proteins as well as certain short-lived regulatory proteins. Required for cellular homeostasis and for survival from DNA damage and developmental changes induced by stress. Degrades polypeptides processively to yield small peptide fragments that are 5 to 10 amino acids long. Binds to DNA in a double-stranded, site-specific manner. This Rickettsia typhi (strain ATCC VR-144 / Wilmington) protein is Lon protease.